A 449-amino-acid polypeptide reads, in one-letter code: Glutamate--tRNA ligase 1 (449 aa).

The short motif at 11 to 21 (PSPTGSLHVGN) is the 'HIGH' region element. The short motif at 242-246 (PLSKR) is the 'KMSKS' region element. Lys245 is a binding site for ATP.

This sequence belongs to the class-I aminoacyl-tRNA synthetase family. Glutamate--tRNA ligase type 1 subfamily. Monomer.

It is found in the cytoplasm. It catalyses the reaction tRNA(Glu) + L-glutamate + ATP = L-glutamyl-tRNA(Glu) + AMP + diphosphate. Catalyzes the attachment of glutamate to tRNA(Glu) in a two-step reaction: glutamate is first activated by ATP to form Glu-AMP and then transferred to the acceptor end of tRNA(Glu). The protein is Glutamate--tRNA ligase 1 of Parvibaculum lavamentivorans (strain DS-1 / DSM 13023 / NCIMB 13966).